A 204-amino-acid chain; its full sequence is Large ribosomal subunit protein eL15 (204 aa).

The protein belongs to the eukaryotic ribosomal protein eL15 family.

This Anopheles gambiae (African malaria mosquito) protein is Large ribosomal subunit protein eL15 (RpL15).